The chain runs to 392 residues: MSCESCLPALSCRTSCSSRPCVPPSCHGCTLPGACNIPANVGNCNWFCEGSFNGNEKETMQFLNDRLASYMEKVRQLERENAELECRIQERNQQQDPLVCPAYQAYFRTIEELQQKILCAKSENARLVVQIDNAKLASDDFRTKYQTELSMRQLVEADINSLRRILDELTLCKSDLEAQVESLREELLCLKKNHEEEVNTLRCQLGDRLNVEVDAAPTVDLNRVLNETRCQYEALVETNRREVEEWFTTQSEELNKQVVSSSEQLQSCQAEIIELRRTVNALEIELQAQHCMRNSLENTLTESEARYSSQLSQVQCLITNVESQLGEIRADLERQNQEYQVLLDVRARLECEINTYRSLLESEDCNLPCNPCATTNASGSCCGPCGSSKRCC.

The segment at 1–56 (MSCESCLPALSCRTSCSSRPCVPPSCHGCTLPGACNIPANVGNCNWFCEGSFNGNE) is head. The region spanning 56-367 (EKETMQFLND…SLLESEDCNL (312 aa)) is the IF rod domain. Residues 57–91 (KETMQFLNDRLASYMEKVRQLERENAELECRIQER) form a coil 1A region. The interval 92 to 102 (NQQQDPLVCPA) is linker 1. The segment at 103-203 (YQAYFRTIEE…HEEEVNTLRC (101 aa)) is coil 1B. Positions 204 to 219 (QLGDRLNVEVDAAPTV) are linker 12. The tract at residues 220–363 (DLNRVLNETR…NTYRSLLESE (144 aa)) is coil 2. The interval 364–392 (DCNLPCNPCATTNASGSCCGPCGSSKRCC) is tail.

This sequence belongs to the intermediate filament family. As to expression, expressed in the hair root in the hair shaft cuticle and cortex.

This is Keratin, type I cuticular Ha4 from Mus musculus (Mouse).